The primary structure comprises 258 residues: Ubiquinone/menaquinone biosynthesis C-methyltransferase UbiE (258 aa).

Residues 1-21 (MPESRTSADGGMETSYGFREV) are disordered. S-adenosyl-L-methionine contacts are provided by residues T81, D102, and 130-131 (NA).

This sequence belongs to the class I-like SAM-binding methyltransferase superfamily. MenG/UbiE family.

It catalyses the reaction a 2-demethylmenaquinol + S-adenosyl-L-methionine = a menaquinol + S-adenosyl-L-homocysteine + H(+). It carries out the reaction a 2-methoxy-6-(all-trans-polyprenyl)benzene-1,4-diol + S-adenosyl-L-methionine = a 5-methoxy-2-methyl-3-(all-trans-polyprenyl)benzene-1,4-diol + S-adenosyl-L-homocysteine + H(+). It functions in the pathway quinol/quinone metabolism; menaquinone biosynthesis; menaquinol from 1,4-dihydroxy-2-naphthoate: step 2/2. It participates in cofactor biosynthesis; ubiquinone biosynthesis. In terms of biological role, methyltransferase required for the conversion of demethylmenaquinol (DMKH2) to menaquinol (MKH2) and the conversion of 2-polyprenyl-6-methoxy-1,4-benzoquinol (DDMQH2) to 2-polyprenyl-3-methyl-6-methoxy-1,4-benzoquinol (DMQH2). The protein is Ubiquinone/menaquinone biosynthesis C-methyltransferase UbiE of Rhizobium leguminosarum bv. trifolii (strain WSM2304).